A 1396-amino-acid polypeptide reads, in one-letter code: ATP-binding cassette transporter pdr1 (1396 aa).

The tract at residues 1-22 is disordered; that stretch reads MSEQEKGKGDLDDPNSKNTKCP. One can recognise an ABC transporter 1 domain in the interval 73-320; sequence LHPINIIFRT…FLDLGFIPAK (248 aa). The ABC transmembrane type-2 1 domain occupies 412 to 622; sequence LQVFATAKVT…GYESIMLNEF (211 aa). Helical transmembrane passes span 431–451, 466–486, 512–532, 543–563, 572–592, and 680–700; these read YIAT…SLFY, VLSN…DIIF, LVEF…VYFL, FIFY…FRFI, IAAL…GAVM, and GIIL…ANFI. In terms of domain architecture, ABC transporter 2 spans 758–1001; it reads LCWRDLNFTV…LVNYFKRIHG (244 aa). 794–801 contributes to the ATP binding site; the sequence is GENKSGKS. An ABC transmembrane type-2 2 domain is found at 1071-1286; sequence FQIYKISMRN…FLEGMIGGVL (216 aa). A run of 5 helical transmembrane segments spans residues 1095 to 1115, 1166 to 1186, 1208 to 1228, 1245 to 1265, and 1361 to 1381; these read VAFN…QGVG, FIIA…TLFF, FAWL…IGIA, FVFI…VGFW, and CIMI…YYII.

The protein belongs to the ABC transporter superfamily. ABCG family. PDR (TC 3.A.1.205) subfamily.

It is found in the endoplasmic reticulum membrane. This chain is ATP-binding cassette transporter pdr1 (pdr1), found in Schizosaccharomyces pombe (strain 972 / ATCC 24843) (Fission yeast).